The sequence spans 210 residues: Urease accessory protein UreF (210 aa).

The protein belongs to the UreF family. In terms of assembly, ureD, UreF and UreG form a complex that acts as a GTP-hydrolysis-dependent molecular chaperone, activating the urease apoprotein by helping to assemble the nickel containing metallocenter of UreC. The UreE protein probably delivers the nickel.

The protein resides in the cytoplasm. Functionally, required for maturation of urease via the functional incorporation of the urease nickel metallocenter. This is Urease accessory protein UreF from Cereibacter sphaeroides (strain ATCC 17023 / DSM 158 / JCM 6121 / CCUG 31486 / LMG 2827 / NBRC 12203 / NCIMB 8253 / ATH 2.4.1.) (Rhodobacter sphaeroides).